Here is a 407-residue protein sequence, read N- to C-terminus: Serine hydroxymethyltransferase (407 aa).

(6S)-5,6,7,8-tetrahydrofolate-binding positions include L120 and 124–126 (GHL). N6-(pyridoxal phosphate)lysine is present on K229.

It belongs to the SHMT family. Homodimer. It depends on pyridoxal 5'-phosphate as a cofactor.

The protein localises to the cytoplasm. The enzyme catalyses (6R)-5,10-methylene-5,6,7,8-tetrahydrofolate + glycine + H2O = (6S)-5,6,7,8-tetrahydrofolate + L-serine. Its pathway is one-carbon metabolism; tetrahydrofolate interconversion. It participates in amino-acid biosynthesis; glycine biosynthesis; glycine from L-serine: step 1/1. Its function is as follows. Catalyzes the reversible interconversion of serine and glycine with tetrahydrofolate (THF) serving as the one-carbon carrier. This reaction serves as the major source of one-carbon groups required for the biosynthesis of purines, thymidylate, methionine, and other important biomolecules. Also exhibits THF-independent aldolase activity toward beta-hydroxyamino acids, producing glycine and aldehydes, via a retro-aldol mechanism. This Deinococcus deserti (strain DSM 17065 / CIP 109153 / LMG 22923 / VCD115) protein is Serine hydroxymethyltransferase.